The chain runs to 127 residues: Large ribosomal subunit protein bL12 (127 aa).

It belongs to the bacterial ribosomal protein bL12 family. In terms of assembly, homodimer. Part of the ribosomal stalk of the 50S ribosomal subunit. Forms a multimeric L10(L12)X complex, where L10 forms an elongated spine to which 2 to 4 L12 dimers bind in a sequential fashion. Binds GTP-bound translation factors.

Functionally, forms part of the ribosomal stalk which helps the ribosome interact with GTP-bound translation factors. Is thus essential for accurate translation. The protein is Large ribosomal subunit protein bL12 of Syntrophobacter fumaroxidans (strain DSM 10017 / MPOB).